The following is a 143-amino-acid chain: Peptide methionine sulfoxide reductase B9 (143 aa).

The MsrB domain occupies 19-140 (DQDWRAILSP…NSVSLKFSEI (122 aa)). The Zn(2+) site is built by Cys-58, Cys-61, Cys-104, and Cys-107. The cysteines at positions 76 and 129 are disulfide-linked. The active-site Nucleophile is the Cys-129.

The protein belongs to the MsrB Met sulfoxide reductase family. Zn(2+) serves as cofactor.

The protein localises to the cytoplasm. It is found in the cytosol. It carries out the reaction L-methionyl-[protein] + [thioredoxin]-disulfide + H2O = L-methionyl-(R)-S-oxide-[protein] + [thioredoxin]-dithiol. Functionally, catalyzes the reduction of methionine sulfoxide (MetSO) to methionine in proteins. Plays a protective role against oxidative stress by restoring activity to proteins that have been inactivated by methionine oxidation. MSRB family specifically reduces the MetSO R-enantiomer. The chain is Peptide methionine sulfoxide reductase B9 (MSRB9) from Arabidopsis thaliana (Mouse-ear cress).